The primary structure comprises 275 residues: Large ribosomal subunit protein uL2 (275 aa).

2 disordered regions span residues 28–48 (KPYAPLLEKKSKSGGRNNNGR) and 223–275 (VVMN…RNKK).

Belongs to the universal ribosomal protein uL2 family. As to quaternary structure, part of the 50S ribosomal subunit. Forms a bridge to the 30S subunit in the 70S ribosome.

Its function is as follows. One of the primary rRNA binding proteins. Required for association of the 30S and 50S subunits to form the 70S ribosome, for tRNA binding and peptide bond formation. It has been suggested to have peptidyltransferase activity; this is somewhat controversial. Makes several contacts with the 16S rRNA in the 70S ribosome. The chain is Large ribosomal subunit protein uL2 from Photobacterium profundum (strain SS9).